A 229-amino-acid chain; its full sequence is Clathrin light chain (229 aa).

Disordered stretches follow at residues 1–24 (MSQF…DSKN) and 76–132 (EMQA…KLRE). The span at 107-132 (EPVRKWKEDQMKRIQERDESSKKLRE) shows a compositional bias: basic and acidic residues. Position 229 is a phosphoserine (S229).

The protein belongs to the clathrin light chain family. In terms of assembly, clathrin coats are formed from molecules containing 3 heavy chains and 3 light chains.

The protein resides in the cytoplasmic vesicle membrane. It localises to the membrane. The protein localises to the coated pit. Functionally, clathrin is the major protein of the polyhedral coat of coated pits and vesicles. The polypeptide is Clathrin light chain (clc1) (Schizosaccharomyces pombe (strain 972 / ATCC 24843) (Fission yeast)).